Reading from the N-terminus, the 223-residue chain is Enolase-phosphatase E1 (223 aa).

Belongs to the HAD-like hydrolase superfamily. MasA/MtnC family. As to quaternary structure, monomer. It depends on Mg(2+) as a cofactor.

The enzyme catalyses 5-methylsulfanyl-2,3-dioxopentyl phosphate + H2O = 1,2-dihydroxy-5-(methylsulfanyl)pent-1-en-3-one + phosphate. Its pathway is amino-acid biosynthesis; L-methionine biosynthesis via salvage pathway; L-methionine from S-methyl-5-thio-alpha-D-ribose 1-phosphate: step 3/6. It participates in amino-acid biosynthesis; L-methionine biosynthesis via salvage pathway; L-methionine from S-methyl-5-thio-alpha-D-ribose 1-phosphate: step 4/6. Its function is as follows. Bifunctional enzyme that catalyzes the enolization of 2,3-diketo-5-methylthiopentyl-1-phosphate (DK-MTP-1-P) into the intermediate 2-hydroxy-3-keto-5-methylthiopentenyl-1-phosphate (HK-MTPenyl-1-P), which is then dephosphorylated to form the acireductone 1,2-dihydroxy-3-keto-5-methylthiopentene (DHK-MTPene). This chain is Enolase-phosphatase E1, found in Aquifex aeolicus (strain VF5).